Here is a 364-residue protein sequence, read N- to C-terminus: UDP-N-acetylglucosamine--N-acetylmuramyl-(pentapeptide) pyrophosphoryl-undecaprenol N-acetylglucosamine transferase (364 aa).

UDP-N-acetyl-alpha-D-glucosamine-binding positions include 10 to 12 (TGG), Asn-124, Arg-166, Ser-196, Ile-252, and Gln-297.

It belongs to the glycosyltransferase 28 family. MurG subfamily.

The protein resides in the cell membrane. It catalyses the reaction di-trans,octa-cis-undecaprenyl diphospho-N-acetyl-alpha-D-muramoyl-L-alanyl-D-glutamyl-meso-2,6-diaminopimeloyl-D-alanyl-D-alanine + UDP-N-acetyl-alpha-D-glucosamine = di-trans,octa-cis-undecaprenyl diphospho-[N-acetyl-alpha-D-glucosaminyl-(1-&gt;4)]-N-acetyl-alpha-D-muramoyl-L-alanyl-D-glutamyl-meso-2,6-diaminopimeloyl-D-alanyl-D-alanine + UDP + H(+). The protein operates within cell wall biogenesis; peptidoglycan biosynthesis. Functionally, cell wall formation. Catalyzes the transfer of a GlcNAc subunit on undecaprenyl-pyrophosphoryl-MurNAc-pentapeptide (lipid intermediate I) to form undecaprenyl-pyrophosphoryl-MurNAc-(pentapeptide)GlcNAc (lipid intermediate II). This Ruminiclostridium cellulolyticum (strain ATCC 35319 / DSM 5812 / JCM 6584 / H10) (Clostridium cellulolyticum) protein is UDP-N-acetylglucosamine--N-acetylmuramyl-(pentapeptide) pyrophosphoryl-undecaprenol N-acetylglucosamine transferase.